The sequence spans 290 residues: MEGSVNQSKWQAYSHLMRINKPIGTLLLLWPTLWALWLAGKGVPSLSILVVFVVGVFLMRAAGCVVNDYADRAVDGHVKRTAARPMPSGRVSEKEAKVLFVVLVLVSFGLVLTLNAMTIWLSLAALALAWAYPFMKRVTHLPQFVLGAAFGWGIPMAYAAVSESLPLSCWLLLLANICWTVAYDTLYAMVDRDDDLKIGIKSTAILFGRYDKLIVGLLQFATLLLMLWVGYLTQMSGAFYWSLLLAGALFIHQQKQIATRERDACFKAFMDNNYVGLVLFIGIALSYWQG.

A run of 8 helical transmembrane segments spans residues 23 to 43 (IGTL…GKGV), 46 to 66 (LSIL…GCVV), 99 to 119 (LFVV…AMTI), 141 to 161 (LPQF…YAAV), 170 to 190 (WLLL…YAMV), 213 to 233 (LIVG…GYLT), 234 to 254 (QMSG…IHQQ), and 268 to 288 (AFMD…LSYW).

The protein belongs to the UbiA prenyltransferase family. Mg(2+) serves as cofactor.

The protein resides in the cell inner membrane. The enzyme catalyses all-trans-octaprenyl diphosphate + 4-hydroxybenzoate = 4-hydroxy-3-(all-trans-octaprenyl)benzoate + diphosphate. Its pathway is cofactor biosynthesis; ubiquinone biosynthesis. In terms of biological role, catalyzes the prenylation of para-hydroxybenzoate (PHB) with an all-trans polyprenyl group. Mediates the second step in the final reaction sequence of ubiquinone-8 (UQ-8) biosynthesis, which is the condensation of the polyisoprenoid side chain with PHB, generating the first membrane-bound Q intermediate 3-octaprenyl-4-hydroxybenzoate. The sequence is that of 4-hydroxybenzoate octaprenyltransferase from Serratia proteamaculans (strain 568).